Consider the following 610-residue polypeptide: Propanediol dehydratase-reactivating factor large subunit (610 aa).

Position 11–13 (11–13 (NSS)) interacts with ATP. Mg(2+) contacts are provided by T105, D166, and D183. ATP-binding positions include 459 to 462 (EEIK), 557 to 558 (GS), and R591.

The protein belongs to the DdrA/PduG family. As to quaternary structure, forms a heterotetramer PduG(2)/PduH(2). Requires Mg(2+) as cofactor.

Its subcellular location is the bacterial microcompartment. The enzyme catalyses ATP + H2O = ADP + phosphate + H(+). It functions in the pathway polyol metabolism; 1,2-propanediol degradation. In terms of biological role, large subunit of the propanediol dehydratase-reactivating factor (DDR), which reactivates suicidally inhibited adenosylcobalamin-dependent propanediol dehydratase (diol dehydratase, DDH) found in the bacterial microcompartment (BMC) dedicated to 1,2-propanediol (1,2-PD) degradation. Reactivates inactivated DDH in the presence of ATP, Mg(2+) and free adenosylcobalamin (AdoCbl), by mediating the exchange of the tightly bound damaged cofactor AdoCbl for a free intact one. This subunit contains the adenosine nucleotide binding site. Functionally, expression of a cosmid containing the full 21-gene pdu operon in E.coli allows E.coli to grow on 1,2-propanediol (1,2-PD) with the appearance of bacterial microcompartments (BMC) in its cytoplasm. Its function is as follows. The 1,2-PD-specific bacterial microcompartment (BMC) concentrates low levels of 1,2-PD catabolic enzymes, concentrates volatile reaction intermediates thus enhancing pathway flux and keeps the level of toxic, mutagenic propionaldehyde low. The chain is Propanediol dehydratase-reactivating factor large subunit from Citrobacter freundii.